A 310-amino-acid polypeptide reads, in one-letter code: Cytochrome f (310 aa).

The signal sequence occupies residues 1–27; sequence MRRILTFFLGSIIIGLSIIISPSSSFA. Heme-binding residues include Tyr-28, Cys-48, Cys-51, and His-52. The helical transmembrane segment at 277-297 threads the bilayer; it reads VIGLIAFFAGVALTQILLVLK.

It belongs to the cytochrome f family. In terms of assembly, the 4 large subunits of the cytochrome b6-f complex are cytochrome b6, subunit IV (17 kDa polypeptide, PetD), cytochrome f and the Rieske protein, while the 4 small subunits are PetG, PetL, PetM and PetN. The complex functions as a dimer. Requires heme as cofactor.

Its subcellular location is the cellular thylakoid membrane. Component of the cytochrome b6-f complex, which mediates electron transfer between photosystem II (PSII) and photosystem I (PSI), cyclic electron flow around PSI, and state transitions. The protein is Cytochrome f of Prochlorococcus marinus (strain SARG / CCMP1375 / SS120).